The chain runs to 519 residues: Demethylepipodophyllotoxin synthase (519 aa).

The chain crosses the membrane as a helical span at residues 6–26 (CLETLLLGFFVLLPCFFYFVW). Heme is bound at residue cysteine 458.

This sequence belongs to the cytochrome P450 family. Requires heme as cofactor. In terms of tissue distribution, rhizome-specific expression.

Its subcellular location is the membrane. The catalysed reaction is (-)-4'-desmethyl-deoxypodophyllotoxin + reduced [NADPH--hemoprotein reductase] + O2 = 4'-demethylepipodophyllotoxin + oxidized [NADPH--hemoprotein reductase] + H2O + H(+). It participates in aromatic compound metabolism; phenylpropanoid biosynthesis. In terms of biological role, cytochrome P450 involved in the biosynthesis of etoposide, a chemotherapeutic compound of the topoisomerase inhibitor family. Catalyzes the hydroxylation of deoxypodophyllotoxin to form epipodophyllotoxin. In Sinopodophyllum hexandrum (Himalayan may apple), this protein is Demethylepipodophyllotoxin synthase.